Consider the following 336-residue polypeptide: Glyceraldehyde-3-phosphate dehydrogenase (336 aa).

Residues 12 to 13 (RI), Asp-34, and Met-79 contribute to the NAD(+) site. Residues 150–152 (SCT), Thr-181, 210–211 (TG), and Arg-233 each bind D-glyceraldehyde 3-phosphate. The active-site Nucleophile is Cys-151. Residue Asn-316 participates in NAD(+) binding.

It belongs to the glyceraldehyde-3-phosphate dehydrogenase family. In terms of assembly, homotetramer.

Its subcellular location is the cytoplasm. The enzyme catalyses D-glyceraldehyde 3-phosphate + phosphate + NAD(+) = (2R)-3-phospho-glyceroyl phosphate + NADH + H(+). It participates in carbohydrate degradation; glycolysis; pyruvate from D-glyceraldehyde 3-phosphate: step 1/5. The protein is Glyceraldehyde-3-phosphate dehydrogenase of Echinococcus multilocularis (Fox tapeworm).